Consider the following 456-residue polypeptide: Coenzyme F420 hydrogenase subunit alpha (456 aa).

4 residues coordinate Ni(2+): Cys63, Cys66, Cys432, and Cys435.

The protein belongs to the [NiFe]/[NiFeSe] hydrogenase large subunit family. As to quaternary structure, pentamer of two alpha chains, two beta chains and a gamma chain. Ni(2+) is required as a cofactor. The cofactor is iron-sulfur cluster. FAD serves as cofactor.

The protein localises to the cell membrane. The enzyme catalyses oxidized coenzyme F420-(gamma-L-Glu)(n) + H2 + H(+) = reduced coenzyme F420-(gamma-L-Glu)(n). In terms of biological role, reduces the physiological low-potential two-electron acceptor coenzyme F420, and the artificial one-electron acceptor methylviologen. In Methanosarcina barkeri (strain Fusaro / DSM 804), this protein is Coenzyme F420 hydrogenase subunit alpha (frhA).